We begin with the raw amino-acid sequence, 130 residues long: Small ribosomal subunit protein uS8 (130 aa).

The protein belongs to the universal ribosomal protein uS8 family.

The protein resides in the cytoplasm. In Daucus carota (Wild carrot), this protein is Small ribosomal subunit protein uS8 (RPS15A).